The sequence spans 177 residues: MNGGHIQLIIGPMFSGKSTELIRRVRRYQIAQYKCITIKYTNDTRYGTGLWTHDKHNFSAMETTKLLNIIDAVTDFSVIGIDEGQFFPDIVEFCEYMANNGKIVIVAALDGTFQRKPFTTISNLIPLSEMVVKLTAVCMKCFKEASFSKRLGTETEIEIIGGEDMYQSVCRKCYINE.

Position 11–18 (11–18) interacts with ATP; that stretch reads GPMFSGKS. The Proton acceptor role is filled by E83. A substrate-binding site is contributed by F113. Zn(2+)-binding residues include C138 and C141. Substrate is bound at residue 157-161; the sequence is IEIIG. Residues C170 and C173 each coordinate Zn(2+).

The protein belongs to the thymidine kinase family. Homotetramer. Two molecules of substrate bind to each enzyme tetramer.

The catalysed reaction is thymidine + ATP = dTMP + ADP + H(+). Its function is as follows. Phosphorylates thymidine and thymidine analogs, such as azidothymidine (AZT). Part of the salvage pathway for pyrimidine deoxyribonucleotide synthesis. This is Thymidine kinase (OPG101) from Procyon lotor (Raccoon).